Here is a 310-residue protein sequence, read N- to C-terminus: Olfactory receptor 2A25 (310 aa).

Residues 1-24 (MGGNQTSITEFLLLGFPIGPRIQM) are Extracellular-facing. Residue asparagine 4 is glycosylated (N-linked (GlcNAc...) asparagine). Residues 25–48 (LLFGLFSLFYIFILLGNGTILGLI) traverse the membrane as a helical segment. Topologically, residues 49 to 56 (SLDSRLHT) are cytoplasmic. Residues 57-78 (PMYFFLSHLAVVDIACACSTVP) traverse the membrane as a helical segment. The Extracellular portion of the chain corresponds to 79-99 (QMLVNLLHPAKPISFAGCMTQ). Cysteine 96 and cysteine 188 are disulfide-bonded. A helical membrane pass occupies residues 100-119 (MFLFLSFAHTECLLLVVMSY). At 120-138 (DRYVAICHPLRYSTIMTWK) the chain is on the cytoplasmic side. The chain crosses the membrane as a helical span at residues 139 to 157 (VCITLALTSWILGVLLALV). The Extracellular segment spans residues 158-195 (HLVLLLPLSFCGPQKLNHFFCEIMAVLKLACADTHINE). Residues 196–218 (VMVLAGAVSVLVGAFFSTVISYV) form a helical membrane-spanning segment. The Cytoplasmic portion of the chain corresponds to 219-235 (HILCAILKIQSGEGCQK). The chain crosses the membrane as a helical span at residues 236 to 258 (AFSICSSHLCVVGLFYGTAIIMY). The Extracellular segment spans residues 259–271 (VEPQYESPKEQKK). Residues 272–291 (YLLLFHSLFNPMLNPLIYSL) form a helical membrane-spanning segment. Residues 292–310 (RNKEVQGTLKRMLEKKRTS) lie on the Cytoplasmic side of the membrane.

It belongs to the G-protein coupled receptor 1 family.

It is found in the cell membrane. Odorant receptor. This chain is Olfactory receptor 2A25 (OR2A25), found in Homo sapiens (Human).